The sequence spans 87 residues: Small ribosomal subunit protein uS17 (87 aa).

Belongs to the universal ribosomal protein uS17 family. As to quaternary structure, part of the 30S ribosomal subunit.

Functionally, one of the primary rRNA binding proteins, it binds specifically to the 5'-end of 16S ribosomal RNA. In Bacillus subtilis (strain 168), this protein is Small ribosomal subunit protein uS17.